The primary structure comprises 156 residues: Persephin (156 aa).

The signal sequence occupies residues 1 to 21; the sequence is MAAGRLRILCLLLLSLHPSLG. 3 cysteine pairs are disulfide-bonded: C66–C124, C93–C152, and C97–C154.

Belongs to the TGF-beta family. GDNF subfamily. As to quaternary structure, homodimer; disulfide-linked. Interacts with GFRA4 coreceptor and RET: forms a 2:2:2 ternary complex composed of PSPN ligand, GFRA4 and RET receptor.

It is found in the secreted. Its function is as follows. Growth factor that exhibits neurotrophic activity on mesencephalic dopaminergic and motor neurons. Acts by binding to its coreceptor, GFRA4, leading to autophosphorylation and activation of the RET receptor. The polypeptide is Persephin (Mus musculus (Mouse)).